We begin with the raw amino-acid sequence, 263 residues long: Transmembrane protein 176B (263 aa).

The next 4 helical transmembrane spans lie at 61-81 (LGVT…CLYF), 89-109 (ASGC…GIVI), 125-145 (LLLA…KSLI), and 197-217 (LFLA…VVSV). Positions 242–263 (KKLLGGDSAPASPTKEKIPVTP) are disordered. Ser-249 and Ser-253 each carry phosphoserine.

The protein belongs to the TMEM176 family. Expressed in spleen by a variety of myeloid cells including macrophages and dendritic cells (at protein level). Ubiquitously expressed with higher expression in lymphoid tissues.

It localises to the nucleus membrane. In terms of biological role, required for the development of cerebellar granule cells. May play a role in the process of maturation of dendritic cells. The sequence is that of Transmembrane protein 176B (Tmem176b) from Rattus norvegicus (Rat).